A 217-amino-acid chain; its full sequence is NADH-quinone oxidoreductase subunit I (217 aa).

Positions Thr-22 to His-41 are disordered. 4Fe-4S ferredoxin-type domains are found at residues Leu-43–Ala-73 and Arg-89–Asp-118. [4Fe-4S] cluster is bound by residues Cys-53, Cys-56, Cys-59, Cys-63, Cys-98, Cys-101, Cys-104, and Cys-108. The interval Ala-193–Arg-217 is disordered.

Belongs to the complex I 23 kDa subunit family. NDH-1 is composed of 14 different subunits. Subunits NuoA, H, J, K, L, M, N constitute the membrane sector of the complex. [4Fe-4S] cluster serves as cofactor.

The protein localises to the cell membrane. The enzyme catalyses a quinone + NADH + 5 H(+)(in) = a quinol + NAD(+) + 4 H(+)(out). Functionally, NDH-1 shuttles electrons from NADH, via FMN and iron-sulfur (Fe-S) centers, to quinones in the respiratory chain. The immediate electron acceptor for the enzyme in this species is believed to be ubiquinone. Couples the redox reaction to proton translocation (for every two electrons transferred, four hydrogen ions are translocated across the cytoplasmic membrane), and thus conserves the redox energy in a proton gradient. The chain is NADH-quinone oxidoreductase subunit I from Frankia casuarinae (strain DSM 45818 / CECT 9043 / HFP020203 / CcI3).